Consider the following 294-residue polypeptide: Acetylglutamate kinase (294 aa).

Substrate is bound by residues 63–64 (GG), Arg85, and Asn188.

This sequence belongs to the acetylglutamate kinase family. ArgB subfamily.

The protein resides in the cytoplasm. It carries out the reaction N-acetyl-L-glutamate + ATP = N-acetyl-L-glutamyl 5-phosphate + ADP. The protein operates within amino-acid biosynthesis; L-arginine biosynthesis; N(2)-acetyl-L-ornithine from L-glutamate: step 2/4. Catalyzes the ATP-dependent phosphorylation of N-acetyl-L-glutamate. This is Acetylglutamate kinase from Methanococcus aeolicus (strain ATCC BAA-1280 / DSM 17508 / OCM 812 / Nankai-3).